The primary structure comprises 123 residues: Small ribosomal subunit protein uS12 (123 aa).

Asp89 bears the 3-methylthioaspartic acid mark.

The protein belongs to the universal ribosomal protein uS12 family. Part of the 30S ribosomal subunit. Contacts proteins S8 and S17. May interact with IF1 in the 30S initiation complex.

With S4 and S5 plays an important role in translational accuracy. Its function is as follows. Interacts with and stabilizes bases of the 16S rRNA that are involved in tRNA selection in the A site and with the mRNA backbone. Located at the interface of the 30S and 50S subunits, it traverses the body of the 30S subunit contacting proteins on the other side and probably holding the rRNA structure together. The combined cluster of proteins S8, S12 and S17 appears to hold together the shoulder and platform of the 30S subunit. In Methylobacterium radiotolerans (strain ATCC 27329 / DSM 1819 / JCM 2831 / NBRC 15690 / NCIMB 10815 / 0-1), this protein is Small ribosomal subunit protein uS12.